The sequence spans 106 residues: Ribosomal processing cysteine protease Prp (106 aa).

Residue His-22 is the Proton donor of the active site. Cys-34 serves as the catalytic Nucleophile.

This sequence belongs to the Prp family. Homodimer. A mutant protein unable to cleave bL27 copurifies with its substrate.

Not inhibited by short peptide analogs; a 6-mer inhibits only 20% while a 13-mer inhibits 63%. Inhibited by Ac-KLNLQFF-CH(2) which binds covalantly to Cys-34. Inhibited by mersalyl acid (C13H18HgNO6). An essential cysteine protease that cleaves the N-terminal 9 amino acids from ribosomal protein bL27. Also acts as an N-terminal protease on the major capsid and scaffold assembly proteins of bacteriophage 80alpha. Cleavage of the N-terminus of bL27 (and thus this enzyme) is essential for growth; it cannot be replaced by a 'pre-cleaved' or non-cleavable form of bL27. Might serve a chaperone function during ribosome assembly. The chain is Ribosomal processing cysteine protease Prp from Staphylococcus aureus (strain NCTC 8325 / PS 47).